A 585-amino-acid chain; its full sequence is MNIFADFDARIKKTLQDIDLKQKDGGELDLSRIGVEPPRDASHGDIATNAAMLLSKAVGQNPRELAARIAEALKADEDVESVDVAGPGFINLRLKASYWQRELLVMLNEGTDFGRSRLGAGKKVNVEYVSANPTGPMHVGHCRGAVVGDVLANLLKFAGYDVVKEYYINDAGAQIDVLARSVMLRYREALGESIGEIPAGLYPGDYLVRVGQELAGEFGTKLLEMPEAEALAIVKDRTIDAMMAMIRADLDALNVHHDVFYSERKLHVDHARAIRNAINDLTLKGHVYKGKLPPPKGQLPEDWEDREQTLFRSTEVGDDIDRPLMKSDGSFTYFAGDVAYFKDKYDRGFNEMIYVLGADHGGYVKRLEAVARAVSDGKAKLTVLLCQLVKLFRNGEPVRMSKRAGEFITLRDVVDEVGRDPVRFMMLYRKNDAPLDFDFAKVTEQSKDNPVFYVQYASARCHSVFRQAADQLGLVDLDRVAMGSHFEKLTDESEIALVRKLAEYPRLIESAAIHQEPHRLAFYLYDLASSFHSQWNRGTENPDLRFIKVNDPDLSLARLGLVQVVSDVLTSGLTIIGADAPTEMH.

The 'HIGH' region signature appears at 131 to 141 (ANPTGPMHVGH).

Belongs to the class-I aminoacyl-tRNA synthetase family. In terms of assembly, monomer.

It is found in the cytoplasm. It carries out the reaction tRNA(Arg) + L-arginine + ATP = L-arginyl-tRNA(Arg) + AMP + diphosphate. This chain is Arginine--tRNA ligase, found in Brucella suis (strain ATCC 23445 / NCTC 10510).